The chain runs to 284 residues: Bifunctional protein FolD (284 aa).

NADP(+)-binding positions include Gly165–Ser167, Ser190, and Val231.

This sequence belongs to the tetrahydrofolate dehydrogenase/cyclohydrolase family. In terms of assembly, homodimer.

It catalyses the reaction (6R)-5,10-methylene-5,6,7,8-tetrahydrofolate + NADP(+) = (6R)-5,10-methenyltetrahydrofolate + NADPH. The catalysed reaction is (6R)-5,10-methenyltetrahydrofolate + H2O = (6R)-10-formyltetrahydrofolate + H(+). Its pathway is one-carbon metabolism; tetrahydrofolate interconversion. Functionally, catalyzes the oxidation of 5,10-methylenetetrahydrofolate to 5,10-methenyltetrahydrofolate and then the hydrolysis of 5,10-methenyltetrahydrofolate to 10-formyltetrahydrofolate. This chain is Bifunctional protein FolD, found in Bacillus licheniformis (strain ATCC 14580 / DSM 13 / JCM 2505 / CCUG 7422 / NBRC 12200 / NCIMB 9375 / NCTC 10341 / NRRL NRS-1264 / Gibson 46).